The primary structure comprises 143 residues: Submaxillary gland androgen-regulated protein 2, isoform gamma (143 aa).

Residues Met1–Cys22 form the signal peptide. A disordered region spans residues Gly28 to Asp50. The span at Leu36–Phe45 shows a compositional bias: polar residues.

It localises to the secreted. In terms of biological role, may play a role in protection or detoxification. This is Submaxillary gland androgen-regulated protein 2, isoform gamma (Smr2) from Mus musculus (Mouse).